The following is a 41-amino-acid chain: Large ribosomal subunit protein bL36 (41 aa).

Belongs to the bacterial ribosomal protein bL36 family.

The chain is Large ribosomal subunit protein bL36 from Ruegeria sp. (strain TM1040) (Silicibacter sp.).